The chain runs to 535 residues: Dynein axonemal assembly factor 8 (535 aa).

Disordered stretches follow at residues 112–215 (AELA…QERR), 228–267 (RDAC…EGPP), 344–380 (PADT…QGMR), 395–444 (TVPP…LRSC), and 461–535 (IAQP…LDQL). Over residues 125-139 (RTKDASSQEGRDPGR) the composition is skewed to basic and acidic residues. Positions 166–175 (GSLSFNTKGS) are enriched in polar residues. Phosphoserine is present on Ser-175. A Phosphoserine modification is found at Ser-362. Positions 415–424 (DSEEEEEEVE) are enriched in acidic residues. Polar residues predominate over residues 435 to 444 (SPSSLGLRSC).

The protein localises to the dynein axonemal particle. It localises to the cytoplasm. Functionally, in cyliated cells, dynein axonemal particle-specific protein required for deployment of ODA to the axoneme. Interacts with outer dynein arm (ODA) subunits. The protein is Dynein axonemal assembly factor 8 (DNAAF8) of Macaca fascicularis (Crab-eating macaque).